Consider the following 223-residue polypeptide: Ribose-5-phosphate isomerase A (223 aa).

Residues Thr-29–Thr-32, Asp-82–Asp-85, and Lys-95–Gly-98 each bind substrate. The active-site Proton acceptor is Glu-104. Lys-122 lines the substrate pocket.

This sequence belongs to the ribose 5-phosphate isomerase family. As to quaternary structure, homodimer.

The enzyme catalyses aldehydo-D-ribose 5-phosphate = D-ribulose 5-phosphate. The protein operates within carbohydrate degradation; pentose phosphate pathway; D-ribose 5-phosphate from D-ribulose 5-phosphate (non-oxidative stage): step 1/1. Functionally, catalyzes the reversible conversion of ribose-5-phosphate to ribulose 5-phosphate. This is Ribose-5-phosphate isomerase A from Neisseria meningitidis serogroup C (strain 053442).